The following is a 129-amino-acid chain: Protein Turandot A1/2 (129 aa).

The N-terminal stretch at 1–21 (MNSSTALMCFALLLISPLCLG) is a signal peptide. Asparagine 49 carries N-linked (GlcNAc...) asparagine glycosylation.

The protein belongs to the Turandot family.

The protein resides in the secreted. Its function is as follows. A humoral factor that plays a role in stress tolerance; gives increased resistance to the lethal effects of bacterial challenge and stress. Regulated by the JAK/STAT pathway and NF-KB-like Relish pathway in the fat body, upd3 in the hemocytes and Mekk1 in response to septic injury and consequent immune response. In Drosophila sechellia (Fruit fly), this protein is Protein Turandot A1/2 (TotA1).